Reading from the N-terminus, the 241-residue chain is MATNAKPVYKRILLKLSGEALQGTEGFGIDASILDRMAQEIKELVELGIQVGVVIGGGNLFRGAGLAKAGMNRVVGDHMGMLATVMNGLAMRDALHRAYVNARLMSAIPLNGVCDSYSWAEAISLLRNNRVVILSAGTGNPFFTTDSAACLRGIEIEADVVLKATKVDGVFTADPAKDPTATMYEQLTYSEVLEKELKVMDLAAFTLARDHKLPIRVFNMNKPGALRRVVMGEKEGTLITE.

An ATP-binding site is contributed by 15–18 (KLSG). The segment at 23 to 28 (GTEGFG) is involved in allosteric activation by GTP. A UMP-binding site is contributed by Gly57. 2 residues coordinate ATP: Gly58 and Arg62. UMP contacts are provided by residues Asp77 and 138–145 (TGNPFFTT). Thr165, Phe171, and Asp174 together coordinate ATP.

The protein belongs to the UMP kinase family. Homohexamer.

It is found in the cytoplasm. The catalysed reaction is UMP + ATP = UDP + ADP. Its pathway is pyrimidine metabolism; CTP biosynthesis via de novo pathway; UDP from UMP (UMPK route): step 1/1. Its activity is regulated as follows. Allosterically activated by GTP. Inhibited by UTP. In terms of biological role, catalyzes the reversible phosphorylation of UMP to UDP. The chain is Uridylate kinase from Escherichia coli O139:H28 (strain E24377A / ETEC).